The primary structure comprises 211 residues: Putative truncated flagellar export/assembly protein LafU (211 aa).

One can recognise an OmpA-like domain in the interval 58–176 (LRVLIKDDQN…RIEIMVLTKS (119 aa)).

This sequence belongs to the MotB family.

In Escherichia coli (strain K12), this protein is Putative truncated flagellar export/assembly protein LafU.